We begin with the raw amino-acid sequence, 91 residues long: Small ribosomal subunit protein uS15c (91 aa).

Belongs to the universal ribosomal protein uS15 family. In terms of assembly, part of the 30S ribosomal subunit.

The protein localises to the plastid. The protein resides in the chloroplast. In Eucalyptus globulus subsp. globulus (Tasmanian blue gum), this protein is Small ribosomal subunit protein uS15c (rps15).